Consider the following 660-residue polypeptide: ATPase WRNIP1 (660 aa).

Residues 17 to 44 (QVQCPVCQQMMPAAHINSHLDRCLLLHP) form a UBZ4-type zinc finger. Cys20, Cys23, His31, His35, and Cys39 together coordinate Zn(2+). The disordered stretch occupies residues 48-191 (AEPAAGSHRA…DDPGHWDADA (144 aa)). Phosphoserine is present on residues Ser65 and Ser75. The segment covering 76 to 89 (ESSALKQPATPTAA) has biased composition (polar residues). Residue Lys81 forms a Glycyl lysine isopeptide (Lys-Gly) (interchain with G-Cter in ubiquitin) linkage. Thr85 is modified (phosphothreonine). Phosphoserine occurs at positions 91 and 92. The segment covering 92-104 (SEGEGEEGDDGGE) has biased composition (acidic residues). Residue Thr116 is modified to Phosphothreonine. Residues 135 to 155 (ARKGMGKRPAAAAAAGSASPR) are compositionally biased toward low complexity. Lys141 participates in a covalent cross-link: Glycyl lysine isopeptide (Lys-Gly) (interchain with G-Cter in ubiquitin). A Phosphoserine modification is found at Ser153. Residues 159-182 (EAEAQEEEEAGVDGDGDADVDGED) show a composition bias toward acidic residues. A Glycyl lysine isopeptide (Lys-Gly) (interchain with G-Cter in ubiquitin) cross-link involves residue Lys220. 265 to 271 (PGCGKTT) serves as a coordination point for ATP. Glycyl lysine isopeptide (Lys-Gly) (interchain with G-Cter in ubiquitin) cross-links involve residues Lys296, Lys305, Lys311, Lys317, and Lys330. A Glycyl lysine isopeptide (Lys-Gly) (interchain with G-Cter in SUMO2); alternate cross-link involves residue Lys477. A Glycyl lysine isopeptide (Lys-Gly) (interchain with G-Cter in ubiquitin); alternate cross-link involves residue Lys477. A phosphotyrosine mark is found at Tyr529 and Tyr557. A Glycyl lysine isopeptide (Lys-Gly) (interchain with G-Cter in ubiquitin) cross-link involves residue Lys622. Lys628 participates in a covalent cross-link: Glycyl lysine isopeptide (Lys-Gly) (interchain with G-Cter in ubiquitin); alternate. Lys628 carries the post-translational modification N6-acetyllysine; alternate. Lys631 is covalently cross-linked (Glycyl lysine isopeptide (Lys-Gly) (interchain with G-Cter in ubiquitin)).

The protein belongs to the AAA ATPase family. RarA/MGS1/WRNIP1 subfamily. Forms homooligomers, possibly octamers. Directly interacts with POLD1, POLD2 and POLD4. Interacts with the N-terminal domain of WRN. Interacts (via UBZ4-type zinc finger) with monoubiquitin and polyubiquitin. Interacts with TRIM14 and PPP6C; these interactions positively regulate the RIGI signaling pathway. Sumoylated with SUMO1 and SUMO2/3. In terms of tissue distribution, ubiquitously expressed.

It is found in the nucleus. It localises to the cytoplasm. The enzyme catalyses ATP + H2O = ADP + phosphate + H(+). In terms of biological role, functions as a modulator of initiation or reinitiation events during DNA polymerase delta-mediated DNA synthesis. In the presence of ATP, stimulation of DNA polymerase delta-mediated DNA synthesis is decreased. Also plays a role in the innate immune defense against viruses. Stabilizes the RIGI dsRNA interaction and promotes RIGI 'Lys-63'-linked polyubiquitination. In turn, RIGI transmits the signal through mitochondrial MAVS. The polypeptide is ATPase WRNIP1 (Mus musculus (Mouse)).